We begin with the raw amino-acid sequence, 1588 residues long: MVDVYNELGLNYDPNFEEQRNLIDVYLRIYFPKIRPEEFISILDFLNESASDAKKGIEKNKIRTVYDTIKNNLILENEPMRDIEITKKKYEKEYVKLFKENYVTQSFIRAYLLDRGKKIDLFRIFDNFILNENYPFIQYQPPDGTPRSRYNEKYLLENERKEIIMKWFENTPWGISFKVRVSDKSDYKYMAINLSDNGRIDYKIQWKEEDMQTVDDIDKTYSFVKDLIRKINRENERFGIKLKIPSDDQFKFAFINTIQKFELPDNFAINHNDLSEFSRYFFPYVALVIEPRKRQSKTKTTERDERSKFGTYLRYKRVSKYDNKTKIEHRIVFFMRNYEYNDQSLSNEISKEFNITEEQALEEINAVRERYPNIKKSRKVLKKLENIPKYKPPGIGVDIQGKTRNNYKMRIAGARDRAQLNRIITFMNILIYLYAETYLYKRPDRQRMKDLLQKLTKIARRRNKVDEIVNHETPIKSVKQMTNIDRKRLTSKTEDDQNQWTRDCQNSGEDKKRRPQQFLNVEELQKLGYVWNPKLGDINFGHYERKIMVDSNGRTDSNKKKSEVVLRAVMLPLDDSGNNYVYYTCGPEENGKHMYIGFLKSKNPYGEAKPCCFIKDQLYSKNNDKRNLFLKSIGLIQNDESEVNKIVGDQLYILQSSNKIQEGRFAFLPKYLDIFLNAMLNNERVIKNHYLVSTTTGYYFKYGTKQDEYRYLNAVGSVLDLSIEDLRNKLSSSLTKDKNQLLFTSLNNGDIRAQFGSMESYLTYINTNKYLEYPLLNDLICSPGVINKYGLNIIIFQRKIRIIRKSFEREKIREHYYIVCQNHENIEDLIDPDRETILIVKEGKNYYPIILVKKEDENTKEVSITKTFQYNSNPENIVSHIFKYYEVNCQQEFKLLIKEKSNSNLNAKETNKILISLGIKEYVPKYQMIDARFKCRYLITNAGYIIPVIPSGIVKNVNIISTVNNYLKDYTTTQKYLTDLSKLTKNKLKIKPIGVFYKDKRQKSYVISAIMTEGYDAVPIIERSMTSEYIKKEKLLTQGRPNDEDIDRDISRGKSSIVVDKRVYEVSKNKYETETYQLFRYHLSYFLNNTTEGGKFKKEIENIINSEDINKRERKLELKNVLYRMTNADLSKTFNQLISRLNKQFGGQDNVSDQSENQSENQSLESETSPIVRELNPLTQANSPISIIQEPDTIQIIPEDFVPGRRNNLRESFVNTDVDEFDYSEQINPLDEPFDYATNKEPMAESVPFPKNEKTWLSIMPDSKIIDYPSYILKNNREYCYINKNKDACNINKHCAWNNSKNLCLFNVKRIQLIDFINQVTEELIQNELRASEILRRGEYFVSNIVDYNVFTERPGERIVMASNSNLEKILSELFGKENIPRIGKKRYKFDNTQTYEQLNFDNPLKETSIWYIQNIIDNNNTVFRAFANTYYWLVHPYDEVSMRNIGYYSPLQTTLSNIYKSQVINWLLQQENQDMIQKISSYIRYNKVEDFVTKLSMDVNTISSGIVELCILSILYETIIYVNDEYFNVIYVLHPTQGIVYDYKKSKNKFTNEKYQSYKKVIDIRFRYSSNSNYPDYIDALYPKKNN.

Over residues 486–495 (RKRLTSKTED) the composition is skewed to basic and acidic residues. Disordered stretches follow at residues 486–515 (RKRL…KRRP) and 1146–1176 (GGQD…RELN). Residues 498–507 (NQWTRDCQNS) are compositionally biased toward polar residues. Positions 1150-1169 (NVSDQSENQSENQSLESETS) are enriched in low complexity.

The protein resides in the virion. This is an uncharacterized protein from Acanthamoeba polyphaga (Amoeba).